Consider the following 346-residue polypeptide: Phosphate acyltransferase (346 aa).

It belongs to the PlsX family. As to quaternary structure, homodimer. Probably interacts with PlsY.

The protein localises to the cytoplasm. It catalyses the reaction a fatty acyl-[ACP] + phosphate = an acyl phosphate + holo-[ACP]. It participates in lipid metabolism; phospholipid metabolism. Catalyzes the reversible formation of acyl-phosphate (acyl-PO(4)) from acyl-[acyl-carrier-protein] (acyl-ACP). This enzyme utilizes acyl-ACP as fatty acyl donor, but not acyl-CoA. The chain is Phosphate acyltransferase from Brucella ovis (strain ATCC 25840 / 63/290 / NCTC 10512).